The sequence spans 103 residues: uncharacterized protein (103 aa).

2 stretches are compositionally biased toward polar residues: residues 1-10 (MSNSCSTSSY) and 18-28 (TRSGSNVNRNY). The tract at residues 1-28 (MSNSCSTSSYPIRRKTPTRSGSNVNRNY) is disordered.

This is an uncharacterized protein from Acanthamoeba polyphaga mimivirus (APMV).